The following is a 135-amino-acid chain: uncharacterized protein (135 aa).

A run of 4 helical transmembrane segments spans residues 7–25 (WSAA…EWTI), 29–51 (ILLT…TGNI), 64–85 (VFIF…EVGI), and 89–108 (ALIF…ISIF).

It belongs to the bacteriophage holin family. Cp-1 holin subfamily.

It localises to the cell membrane. This is an uncharacterized protein from Halalkalibacterium halodurans (strain ATCC BAA-125 / DSM 18197 / FERM 7344 / JCM 9153 / C-125) (Bacillus halodurans).